Consider the following 500-residue polypeptide: Protein SLENDER RICE1-LIKE 2 (500 aa).

Positions 68-454 constitute a GRAS domain; it reads KELEKMALRS…QRLYSASAWR (387 aa). The interval 75-135 is leucine repeat I (LRI); the sequence is LRSVNLMVTC…DALAERLFPA (61 aa). The tract at residues 154–219 is VHIID; the sequence is FRGFYEAGPY…GGPPFLRITG (66 aa). The VHIID signature appears at 185–189; it reads VHVID. The leucine repeat II (LRII) stretch occupies residues 233-265; that stretch reads DVGLRLAEFARSCSVPFAFRGIAADQLDGLRPW. The PFYRE stretch occupies residues 275 to 376; sequence VAINSVLQLH…EAYLQGEIAD (102 aa). The short motif at 283–287 is the LXXLL motif element; the sequence is LHRLL. Positions 379–454 are SAW; the sequence is SREGSSRVER…QRLYSASAWR (76 aa). Residues 466-500 are disordered; that stretch reads SGAADAMEESQNSNTNGGGGGSSGGGHGALNQIMQ. Positions 481 to 493 are enriched in gly residues; that stretch reads NGGGGGSSGGGHG.

It belongs to the GRAS family. As to expression, expressed at low levels in leaf blades, leaf sheaths, rachis and flowers. Expressed in the embryo of immature seeds.

It localises to the nucleus. Its function is as follows. Probable transcriptional regulator that acts as a repressor of the gibberellin (GA) signaling pathway. Its repressive activity is weaker than that of SLR1. Its overexpression prevents the GA signaling pathway and induces a dwarf phenotype in Arabidopsis thaliana plants. This is Protein SLENDER RICE1-LIKE 2 from Oryza sativa subsp. japonica (Rice).